A 486-amino-acid polypeptide reads, in one-letter code: Nucleolar GTP-binding protein 2 (486 aa).

The segment at 1–20 (MGTGKKEKSRRIREGDTKDG) is disordered. 3 positions are modified to phosphoserine: Ser60, Ser85, and Ser155. The CP-type G domain maps to 212-373 (WNELYKVIDS…LIDCPGIVPP (162 aa)). GTP-binding positions include 322 to 329 (GYPNTGKS) and 366 to 370 (DCPGI).

The protein belongs to the TRAFAC class YlqF/YawG GTPase family. NOG2 subfamily.

The protein localises to the nucleus. Its subcellular location is the nucleolus. Functionally, GTPase that associates with pre-60S ribosomal subunits in the nucleolus and is required for their nuclear export and maturation. The polypeptide is Nucleolar GTP-binding protein 2 (NOG2) (Saccharomyces cerevisiae (strain ATCC 204508 / S288c) (Baker's yeast)).